Consider the following 142-residue polypeptide: Hemoglobin subunit alpha-2 (142 aa).

The region spanning 2–142 is the Globin domain; that stretch reads VLSPADKTNV…VSTVLTSKYR (141 aa). An O2-binding site is contributed by H59. H88 is a binding site for heme b.

The protein belongs to the globin family. In terms of assembly, heterotetramer of two alpha chains and two beta chains. In terms of tissue distribution, red blood cells.

Involved in oxygen transport from the lung to the various peripheral tissues. Functionally, hemopressin acts as an antagonist peptide of the cannabinoid receptor CNR1. Hemopressin-binding efficiently blocks cannabinoid receptor CNR1 and subsequent signaling. In Hylobates lar (Lar gibbon), this protein is Hemoglobin subunit alpha-2 (HBA2).